A 432-amino-acid chain; its full sequence is Adenosylhomocysteinase (432 aa).

Substrate is bound by residues Thr57, Asp131, and Glu156. Residue 157 to 159 (TTT) participates in NAD(+) binding. Ser183 bears the Phosphoserine mark. Residues Lys186 and Asp190 each contribute to the substrate site. Lys186 is modified (N6-(2-hydroxyisobutyryl)lysine). Tyr193 is modified (phosphotyrosine). NAD(+) contacts are provided by residues 222-227 (GDVGKG), Glu243, Asn248, 299-301 (IGH), Asn346, His353, Lys426, 426-430 (KPDHY), and Tyr430.

Belongs to the adenosylhomocysteinase family. Homotetramer. Interaction with AHCYL1. Requires NAD(+) as cofactor.

The protein resides in the cytoplasm. Its subcellular location is the melanosome. It localises to the nucleus. The protein localises to the endoplasmic reticulum. It carries out the reaction S-adenosyl-L-homocysteine + H2O = L-homocysteine + adenosine. It functions in the pathway amino-acid biosynthesis; L-homocysteine biosynthesis; L-homocysteine from S-adenosyl-L-homocysteine: step 1/1. Functionally, catalyzes the hydrolysis of S-adenosyl-L-homocysteine to form adenosine and homocysteine. Binds copper ions. The protein is Adenosylhomocysteinase (Ahcy) of Rattus norvegicus (Rat).